The primary structure comprises 581 residues: Semenogelin-2 (581 aa).

A signal peptide spans 1–23; the sequence is MKSIILFVLSLLLILEKQAAVMG. Disordered regions lie at residues 24–62, 132–157, 173–194, and 271–581; these read QKGG…SKGS, GGKA…GISS, KEQA…QSSY, and NLNQ…PIST. Polar residues-rich tracts occupy residues 138 to 157 and 174 to 194; these read GTQN…GISS and EQAS…QSSY. A compositionally biased stretch (basic and acidic residues) spans 291–310; it reads HTEERQLNHGEKSVQKDISK. Residues 324–333 are compositionally biased toward polar residues; sequence KSQNQVTIHS. The segment covering 334-344 has biased composition (basic and acidic residues); that stretch reads QDQEHGHKENK. A compositionally biased stretch (polar residues) spans 366 to 396; it reads KSVSKGSISIQTEEQIHGKSQNQVRIPSQAQ. Basic and acidic residues-rich tracts occupy residues 412-425 and 455-464; these read TEER…KDIQ and DQEHGHKENK. 2 stretches are compositionally biased toward polar residues: residues 481-497 and 505-529; these read GKNT…SFQT and SQIQ…SGQS. 2 stretches are compositionally biased toward basic and acidic residues: residues 530–545 and 558–581; these read ADRE…KGRY and TEHE…PIST.

This sequence belongs to the semenogelin family. As to quaternary structure, interacts with SERPINA5.

It localises to the secreted. In terms of biological role, participates in the formation of a gel matrix (sperm coagulum) entrapping the accessory gland secretions and ejaculated spermatozoa. In Pongo abelii (Sumatran orangutan), this protein is Semenogelin-2 (SEMG2).